Consider the following 314-residue polypeptide: Olfactory receptor 5P81 (314 aa).

At 1-28 (MAFLEDGNHTVVTEFILLGLTDDPVLRV) the chain is on the extracellular side. N8 is a glycosylation site (N-linked (GlcNAc...) asparagine). A helical transmembrane segment spans residues 29–49 (ILFIIILCIYLVTVSGNLSTI). Residues 50–57 (LLIRVSSQ) are Cytoplasmic-facing. A helical membrane pass occupies residues 58–78 (LHHPMYFFLSHLASIDIAISS). Residues 79 to 102 (SVTPNMVVNFLVERSSISYIGCGI) are Extracellular-facing. A disulfide bridge connects residues C100 and C192. The chain crosses the membrane as a helical span at residues 103 to 123 (QLGSAVFFGAIECFLLAVMAY). Residues 124 to 136 (DRFVAICNPLLYS) are Cytoplasmic-facing. The chain crosses the membrane as a helical span at residues 137 to 157 (TKMSKQVCIQLLVGSYIGGFI). The Extracellular segment spans residues 158 to 199 (HASFFTLSFVSFLFCGPNRINHFFCDFTPLVELSCSDNSVLI). The helical transmembrane segment at 200–220 (ILDSFSTGTIIVITVFVIAIS) threads the bilayer. Topologically, residues 221–240 (YTCILITILKMHSTEGRHKA) are cytoplasmic. The chain crosses the membrane as a helical span at residues 241-261 (FSTCTSHLTVVTLLYGTVTFI). The Extracellular segment spans residues 262–274 (YVMPKSSYSTDQN). The helical transmembrane segment at 275 to 295 (KVISVFYMVVIPMLNPIIYSL) threads the bilayer. The Cytoplasmic portion of the chain corresponds to 296-314 (RNNEIKGALKKQLGEKNIF).

Belongs to the G-protein coupled receptor 1 family.

Its subcellular location is the cell membrane. Potential odorant receptor. The chain is Olfactory receptor 5P81 from Mus musculus (Mouse).